The primary structure comprises 110 residues: Urease subunit beta (110 aa).

Belongs to the urease beta subunit family. Heterotrimer of UreA (gamma), UreB (beta) and UreC (alpha) subunits. Three heterotrimers associate to form the active enzyme.

The protein resides in the cytoplasm. It carries out the reaction urea + 2 H2O + H(+) = hydrogencarbonate + 2 NH4(+). It participates in nitrogen metabolism; urea degradation; CO(2) and NH(3) from urea (urease route): step 1/1. The chain is Urease subunit beta from Pseudoalteromonas translucida (strain TAC 125).